We begin with the raw amino-acid sequence, 458 residues long: Monomethylamine methyltransferase MtmB2 (458 aa).

Residue O202 is a non-standard amino acid, pyrrolysine.

It belongs to the monomethylamine methyltransferase family. Can form a complex with MtmC (MtmC1 or MtmC2).

It catalyses the reaction Co(I)-[methylamine-specific corrinoid protein] + methylamine + H(+) = methyl-Co(III)-[methylamine-specific corrinoid protein] + NH4(+). It participates in one-carbon metabolism; methanogenesis from methylamine. In terms of biological role, catalyzes the transfer of the methyl group from monomethylamine to the corrinoid cofactor of MtmC (MtmC1 or MtmC2). The polypeptide is Monomethylamine methyltransferase MtmB2 (mtmB2) (Methanosarcina barkeri).